We begin with the raw amino-acid sequence, 186 residues long: Potassium-transporting ATPase KdpC subunit (186 aa).

The helical transmembrane segment at 9-29 (AAVVLFGGCLLVLGLLYPLAM) threads the bilayer.

It belongs to the KdpC family. As to quaternary structure, the system is composed of three essential subunits: KdpA, KdpB and KdpC.

The protein localises to the cell membrane. Functionally, part of the high-affinity ATP-driven potassium transport (or Kdp) system, which catalyzes the hydrolysis of ATP coupled with the electrogenic transport of potassium into the cytoplasm. This subunit acts as a catalytic chaperone that increases the ATP-binding affinity of the ATP-hydrolyzing subunit KdpB by the formation of a transient KdpB/KdpC/ATP ternary complex. This chain is Potassium-transporting ATPase KdpC subunit, found in Methanosphaerula palustris (strain ATCC BAA-1556 / DSM 19958 / E1-9c).